Reading from the N-terminus, the 131-residue chain is UPF0102 protein YraN (131 aa).

The segment covering 1-19 (MATVPTRSGSPRQLTTKQT) has biased composition (polar residues). Residues 1–20 (MATVPTRSGSPRQLTTKQTG) are disordered.

This sequence belongs to the UPF0102 family.

The protein is UPF0102 protein YraN of Escherichia coli (strain 55989 / EAEC).